Reading from the N-terminus, the 227-residue chain is Cytochrome c oxidase subunit 2 (227 aa).

At 1–14 the chain is on the mitochondrial intermembrane side; the sequence is MAYPFQLGLQDASS. The chain crosses the membrane as a helical span at residues 15–45; the sequence is PIMEELTNFHDHTLMIVFLISSLVLYIISSM. The Mitochondrial matrix segment spans residues 46-59; the sequence is LTTKMTHTSTMDAQ. The chain crosses the membrane as a helical span at residues 60–87; it reads EVETIWTVLPAVILILIALPSLRILYMM. Over 88 to 227 the chain is Mitochondrial intermembrane; the sequence is DEINNPVLTV…HFENWSTSMI (140 aa). Cu cation contacts are provided by His161, Cys196, Glu198, Cys200, His204, and Met207. Glu198 contributes to the Mg(2+) binding site.

It belongs to the cytochrome c oxidase subunit 2 family. In terms of assembly, component of the cytochrome c oxidase (complex IV, CIV), a multisubunit enzyme composed of 14 subunits. The complex is composed of a catalytic core of 3 subunits MT-CO1, MT-CO2 and MT-CO3, encoded in the mitochondrial DNA, and 11 supernumerary subunits COX4I, COX5A, COX5B, COX6A, COX6B, COX6C, COX7A, COX7B, COX7C, COX8 and NDUFA4, which are encoded in the nuclear genome. The complex exists as a monomer or a dimer and forms supercomplexes (SCs) in the inner mitochondrial membrane with NADH-ubiquinone oxidoreductase (complex I, CI) and ubiquinol-cytochrome c oxidoreductase (cytochrome b-c1 complex, complex III, CIII), resulting in different assemblies (supercomplex SCI(1)III(2)IV(1) and megacomplex MCI(2)III(2)IV(2)). Found in a complex with TMEM177, COA6, COX18, COX20, SCO1 and SCO2. Interacts with TMEM177 in a COX20-dependent manner. Interacts with COX20. Interacts with COX16. Requires Cu cation as cofactor.

The protein resides in the mitochondrion inner membrane. The catalysed reaction is 4 Fe(II)-[cytochrome c] + O2 + 8 H(+)(in) = 4 Fe(III)-[cytochrome c] + 2 H2O + 4 H(+)(out). In terms of biological role, component of the cytochrome c oxidase, the last enzyme in the mitochondrial electron transport chain which drives oxidative phosphorylation. The respiratory chain contains 3 multisubunit complexes succinate dehydrogenase (complex II, CII), ubiquinol-cytochrome c oxidoreductase (cytochrome b-c1 complex, complex III, CIII) and cytochrome c oxidase (complex IV, CIV), that cooperate to transfer electrons derived from NADH and succinate to molecular oxygen, creating an electrochemical gradient over the inner membrane that drives transmembrane transport and the ATP synthase. Cytochrome c oxidase is the component of the respiratory chain that catalyzes the reduction of oxygen to water. Electrons originating from reduced cytochrome c in the intermembrane space (IMS) are transferred via the dinuclear copper A center (CU(A)) of subunit 2 and heme A of subunit 1 to the active site in subunit 1, a binuclear center (BNC) formed by heme A3 and copper B (CU(B)). The BNC reduces molecular oxygen to 2 water molecules using 4 electrons from cytochrome c in the IMS and 4 protons from the mitochondrial matrix. In Lophuromys flavopunctatus (Yellow-spotted brush-furred rat), this protein is Cytochrome c oxidase subunit 2 (MT-CO2).